Reading from the N-terminus, the 188-residue chain is Probable DNA-directed RNA polymerase subunit delta (188 aa).

The HTH HARE-type domain occupies 14-83 (LSMIEVARAI…GENKWGLRSW (70 aa)). Positions 119-188 (EDAIDYSADD…EDEEDEDEEE (70 aa)) are disordered.

The protein belongs to the RpoE family. In terms of assembly, RNAP is composed of a core of 2 alpha, a beta and a beta' subunits. The core is associated with a delta subunit and one of several sigma factors.

Functionally, participates in both the initiation and recycling phases of transcription. In the presence of the delta subunit, RNAP displays an increased specificity of transcription, a decreased affinity for nucleic acids, and an increased efficiency of RNA synthesis because of enhanced recycling. The polypeptide is Probable DNA-directed RNA polymerase subunit delta (Streptococcus equi subsp. zooepidemicus (strain H70)).